Reading from the N-terminus, the 283-residue chain is Bifunctional protein FolD (283 aa).

Residues 165 to 167 (GRG), Thr-192, and Val-233 contribute to the NADP(+) site.

This sequence belongs to the tetrahydrofolate dehydrogenase/cyclohydrolase family. As to quaternary structure, homodimer.

It carries out the reaction (6R)-5,10-methylene-5,6,7,8-tetrahydrofolate + NADP(+) = (6R)-5,10-methenyltetrahydrofolate + NADPH. It catalyses the reaction (6R)-5,10-methenyltetrahydrofolate + H2O = (6R)-10-formyltetrahydrofolate + H(+). It participates in one-carbon metabolism; tetrahydrofolate interconversion. Functionally, catalyzes the oxidation of 5,10-methylenetetrahydrofolate to 5,10-methenyltetrahydrofolate and then the hydrolysis of 5,10-methenyltetrahydrofolate to 10-formyltetrahydrofolate. This is Bifunctional protein FolD from Mycolicibacterium smegmatis (strain ATCC 700084 / mc(2)155) (Mycobacterium smegmatis).